The chain runs to 119 residues: Holo-[acyl-carrier-protein] synthase (119 aa).

The Mg(2+) site is built by aspartate 8 and glutamate 50.

Belongs to the P-Pant transferase superfamily. AcpS family. The cofactor is Mg(2+).

It localises to the cytoplasm. The enzyme catalyses apo-[ACP] + CoA = holo-[ACP] + adenosine 3',5'-bisphosphate + H(+). Transfers the 4'-phosphopantetheine moiety from coenzyme A to a Ser of acyl-carrier-protein. The protein is Holo-[acyl-carrier-protein] synthase of Clavibacter sepedonicus (Clavibacter michiganensis subsp. sepedonicus).